Here is a 446-residue protein sequence, read N- to C-terminus: Argininosuccinate lyase (446 aa).

It belongs to the lyase 1 family. Argininosuccinate lyase subfamily.

It localises to the cytoplasm. It catalyses the reaction 2-(N(omega)-L-arginino)succinate = fumarate + L-arginine. The protein operates within amino-acid biosynthesis; L-arginine biosynthesis; L-arginine from L-ornithine and carbamoyl phosphate: step 3/3. This is Argininosuccinate lyase from Bacteroides thetaiotaomicron (strain ATCC 29148 / DSM 2079 / JCM 5827 / CCUG 10774 / NCTC 10582 / VPI-5482 / E50).